Reading from the N-terminus, the 459-residue chain is Cysteine--tRNA ligase (459 aa).

A Zn(2+)-binding site is contributed by cysteine 28. Residues 30-40 (VTVYDLCHFGH) carry the 'HIGH' region motif. Residues cysteine 209, histidine 234, and glutamate 238 each coordinate Zn(2+). Residues 266–270 (KMSKS) carry the 'KMSKS' region motif. Lysine 269 contacts ATP.

This sequence belongs to the class-I aminoacyl-tRNA synthetase family. In terms of assembly, monomer. Requires Zn(2+) as cofactor.

It is found in the cytoplasm. It catalyses the reaction tRNA(Cys) + L-cysteine + ATP = L-cysteinyl-tRNA(Cys) + AMP + diphosphate. The polypeptide is Cysteine--tRNA ligase (Actinobacillus pleuropneumoniae serotype 5b (strain L20)).